Here is a 61-residue protein sequence, read N- to C-terminus: MFHLVDFQVTIAEILLIIMRTFKVSIWNLDYIINLIIKNLSKSLTENKYSQLDEEQPMEID.

Positions 18-24 are important for host Golgi localization; that stretch reads IMRTFKV.

This sequence belongs to the coronaviruses accessory protein 6 family. Interacts (via C-terminus) with host RAE1 in the NUP98-RAE1 complex; this interaction disrupts the host nuclear import. Interacts with host KPNA2; this interaction may inhibit IFN-beta production by blocking IRF3 nuclear translocation.

It localises to the host endoplasmic reticulum membrane. It is found in the host Golgi apparatus membrane. Functionally, disrupts bidirectional nucleocytoplasmic transport by interacting with the host RAE1-NUP98 complex. Disrupts cell nuclear import complex formation by tethering karyopherin alpha 2 and karyopherin beta 1 to the membrane. Retention of import factors at the ER/Golgi membrane leads to a loss of transport into the nucleus. Prevents STAT1 nuclear translocation in response to interferon signaling, thus blocking the expression of interferon stimulated genes (ISGs) that display multiple antiviral activities. Suppresses IFN-beta production possibly by blocking IRF3 nuclear translocation. Might induce accumulation of host HNRNPA1. Its function is as follows. May play a role in viral double membrane vesicles networks to enhance viral replication. This chain is ORF6 protein, found in Homo sapiens (Human).